Consider the following 305-residue polypeptide: Superoxide dismutase [Fe] 2, chloroplastic (305 aa).

A chloroplast-targeting transit peptide spans 1–46 (MMNVAVTATPSSLLYSPLLLPSQGPNRRMQWKRNGKRRLGTKVAVS). Fe cation contacts are provided by histidine 77, histidine 129, aspartate 228, and histidine 232. The disordered stretch occupies residues 270–305 (AVQREQEGTETEDEENPDDEVPEVYLDSDIDVSEVD). Positions 277–305 (GTETEDEENPDDEVPEVYLDSDIDVSEVD) are enriched in acidic residues.

It belongs to the iron/manganese superoxide dismutase family. As to quaternary structure, heterodimer with FSD3. Interacts with MRL7 and PRDA1. The cofactor is Fe cation.

It localises to the plastid. The protein localises to the chloroplast thylakoid. It catalyses the reaction 2 superoxide + 2 H(+) = H2O2 + O2. Its activity is regulated as follows. Activated by cpn20/cpn21 (in vitro). Functionally, destroys superoxide anion radicals which are normally produced within the cells and which are toxic to biological systems. Plays important role in chloroplast development, particularly in the maintenance of thylakoids membranes. Seems to act as a heterodimer with FSD3. The chain is Superoxide dismutase [Fe] 2, chloroplastic (FSD2) from Arabidopsis thaliana (Mouse-ear cress).